The following is a 242-amino-acid chain: Segregation and condensation protein A (242 aa).

Belongs to the ScpA family. In terms of assembly, component of a cohesin-like complex composed of ScpA, ScpB and the Smc homodimer, in which ScpA and ScpB bind to the head domain of Smc. The presence of the three proteins is required for the association of the complex with DNA.

The protein resides in the cytoplasm. Participates in chromosomal partition during cell division. May act via the formation of a condensin-like complex containing Smc and ScpB that pull DNA away from mid-cell into both cell halves. The polypeptide is Segregation and condensation protein A (Streptococcus pneumoniae serotype 2 (strain D39 / NCTC 7466)).